A 227-amino-acid chain; its full sequence is Cytochrome c oxidase subunit 2 (227 aa).

Residues 1–14 are Mitochondrial intermembrane-facing; that stretch reads MAYPAQMGFQDATS. The chain crosses the membrane as a helical span at residues 15 to 45; sequence PIMEELLYFHDHTLMIVFMISSLVLYTISLM. Residues 46-59 lie on the Mitochondrial matrix side of the membrane; sequence LTTSLTHTNTMNAQ. A helical membrane pass occupies residues 60–87; it reads EVETVWTILPAIICILIALPSLRILYMM. The Mitochondrial intermembrane portion of the chain corresponds to 88-227; that stretch reads DEINNPSLTI…YFEKWLLTML (140 aa). 6 residues coordinate Cu cation: His-161, Cys-196, Glu-198, Cys-200, His-204, and Met-207. Residue Glu-198 coordinates Mg(2+). Tyr-218 bears the Phosphotyrosine mark.

This sequence belongs to the cytochrome c oxidase subunit 2 family. In terms of assembly, component of the cytochrome c oxidase (complex IV, CIV), a multisubunit enzyme composed of 14 subunits. The complex is composed of a catalytic core of 3 subunits MT-CO1, MT-CO2 and MT-CO3, encoded in the mitochondrial DNA, and 11 supernumerary subunits COX4I, COX5A, COX5B, COX6A, COX6B, COX6C, COX7A, COX7B, COX7C, COX8 and NDUFA4, which are encoded in the nuclear genome. The complex exists as a monomer or a dimer and forms supercomplexes (SCs) in the inner mitochondrial membrane with NADH-ubiquinone oxidoreductase (complex I, CI) and ubiquinol-cytochrome c oxidoreductase (cytochrome b-c1 complex, complex III, CIII), resulting in different assemblies (supercomplex SCI(1)III(2)IV(1) and megacomplex MCI(2)III(2)IV(2)). Found in a complex with TMEM177, COA6, COX18, COX20, SCO1 and SCO2. Interacts with TMEM177 in a COX20-dependent manner. Interacts with COX20. Interacts with COX16. The cofactor is Cu cation.

Its subcellular location is the mitochondrion inner membrane. The catalysed reaction is 4 Fe(II)-[cytochrome c] + O2 + 8 H(+)(in) = 4 Fe(III)-[cytochrome c] + 2 H2O + 4 H(+)(out). Component of the cytochrome c oxidase, the last enzyme in the mitochondrial electron transport chain which drives oxidative phosphorylation. The respiratory chain contains 3 multisubunit complexes succinate dehydrogenase (complex II, CII), ubiquinol-cytochrome c oxidoreductase (cytochrome b-c1 complex, complex III, CIII) and cytochrome c oxidase (complex IV, CIV), that cooperate to transfer electrons derived from NADH and succinate to molecular oxygen, creating an electrochemical gradient over the inner membrane that drives transmembrane transport and the ATP synthase. Cytochrome c oxidase is the component of the respiratory chain that catalyzes the reduction of oxygen to water. Electrons originating from reduced cytochrome c in the intermembrane space (IMS) are transferred via the dinuclear copper A center (CU(A)) of subunit 2 and heme A of subunit 1 to the active site in subunit 1, a binuclear center (BNC) formed by heme A3 and copper B (CU(B)). The BNC reduces molecular oxygen to 2 water molecules using 4 electrons from cytochrome c in the IMS and 4 protons from the mitochondrial matrix. This chain is Cytochrome c oxidase subunit 2 (MT-CO2), found in Daubentonia madagascariensis (Aye-aye).